We begin with the raw amino-acid sequence, 363 residues long: UDP-N-acetylglucosamine--N-acetylmuramyl-(pentapeptide) pyrophosphoryl-undecaprenol N-acetylglucosamine transferase (363 aa).

Residues 10-12 (TGG), Asn124, Ser195, Ile250, and Gln295 each bind UDP-N-acetyl-alpha-D-glucosamine.

This sequence belongs to the glycosyltransferase 28 family. MurG subfamily.

It localises to the cell membrane. It catalyses the reaction di-trans,octa-cis-undecaprenyl diphospho-N-acetyl-alpha-D-muramoyl-L-alanyl-D-glutamyl-meso-2,6-diaminopimeloyl-D-alanyl-D-alanine + UDP-N-acetyl-alpha-D-glucosamine = di-trans,octa-cis-undecaprenyl diphospho-[N-acetyl-alpha-D-glucosaminyl-(1-&gt;4)]-N-acetyl-alpha-D-muramoyl-L-alanyl-D-glutamyl-meso-2,6-diaminopimeloyl-D-alanyl-D-alanine + UDP + H(+). Its pathway is cell wall biogenesis; peptidoglycan biosynthesis. Cell wall formation. Catalyzes the transfer of a GlcNAc subunit on undecaprenyl-pyrophosphoryl-MurNAc-pentapeptide (lipid intermediate I) to form undecaprenyl-pyrophosphoryl-MurNAc-(pentapeptide)GlcNAc (lipid intermediate II). This is UDP-N-acetylglucosamine--N-acetylmuramyl-(pentapeptide) pyrophosphoryl-undecaprenol N-acetylglucosamine transferase from Halalkalibacterium halodurans (strain ATCC BAA-125 / DSM 18197 / FERM 7344 / JCM 9153 / C-125) (Bacillus halodurans).